The following is a 228-amino-acid chain: UPF0173 metal-dependent hydrolase RBAM_026340 (228 aa).

The protein belongs to the UPF0173 family.

This is UPF0173 metal-dependent hydrolase RBAM_026340 from Bacillus velezensis (strain DSM 23117 / BGSC 10A6 / LMG 26770 / FZB42) (Bacillus amyloliquefaciens subsp. plantarum).